The chain runs to 80 residues: Acyl carrier protein (80 aa).

A Carrier domain is found at 4–79 (ANVEQKVKNI…DAVNYITTHK (76 aa)). O-(pantetheine 4'-phosphoryl)serine is present on Ser-39.

It belongs to the acyl carrier protein (ACP) family. Post-translationally, 4'-phosphopantetheine is transferred from CoA to a specific serine of apo-ACP by AcpS. This modification is essential for activity because fatty acids are bound in thioester linkage to the sulfhydryl of the prosthetic group.

Its subcellular location is the cytoplasm. Its pathway is lipid metabolism; fatty acid biosynthesis. Functionally, carrier of the growing fatty acid chain in fatty acid biosynthesis. The sequence is that of Acyl carrier protein from Anaeromyxobacter sp. (strain Fw109-5).